A 298-amino-acid chain; its full sequence is ATP synthase F(1) complex subunit gamma, mitochondrial (298 aa).

Residues 1–25 (MFSRASVVGLSACAVQPQWIQVRNM) constitute a mitochondrion transit peptide. Residue lysine 39 is modified to N6-acetyllysine. At lysine 49 the chain carries N6-succinyllysine. At lysine 55 the chain carries N6-acetyllysine. Lysine 115 bears the N6-acetyllysine; alternate mark. The residue at position 115 (lysine 115) is an N6-succinyllysine; alternate. The residue at position 138 (lysine 138) is an N6-acetyllysine. Serine 146 is subject to Phosphoserine. Lysine 154 bears the N6-acetyllysine; alternate mark. Lysine 154 carries the N6-succinyllysine; alternate modification. Lysine 197 is subject to N6-acetyllysine. Position 270 is an N6-succinyllysine (lysine 270).

It belongs to the ATPase gamma chain family. In terms of assembly, component of the ATP synthase complex composed at least of ATP5F1A/subunit alpha, ATP5F1B/subunit beta, ATP5MC1/subunit c (homooctomer), MT-ATP6/subunit a, MT-ATP8/subunit 8, ATP5ME/subunit e, ATP5MF/subunit f, ATP5MG/subunit g, ATP5MK/subunit k, ATP5MJ/subunit j, ATP5F1C/subunit gamma, ATP5F1D/subunit delta, ATP5F1E/subunit epsilon, ATP5PF/subunit F6, ATP5PB/subunit b, ATP5PD/subunit d, ATP5PO/subunit OSCP. ATP synthase complex consists of a soluble F(1) head domain (subunits alpha(3) and beta(3)) - the catalytic core - and a membrane F(0) domain - the membrane proton channel (subunits c, a, 8, e, f, g, k and j). These two domains are linked by a central stalk (subunits gamma, delta, and epsilon) rotating inside the F1 region and a stationary peripheral stalk (subunits F6, b, d, and OSCP). Interacts with FLVCR2; this interaction occurs in the absence of heme and is disrupted upon heme binding.

It is found in the mitochondrion inner membrane. Its function is as follows. Subunit gamma, of the mitochondrial membrane ATP synthase complex (F(1)F(0) ATP synthase or Complex V) that produces ATP from ADP in the presence of a proton gradient across the membrane which is generated by electron transport complexes of the respiratory chain. ATP synthase complex consist of a soluble F(1) head domain - the catalytic core - and a membrane F(1) domain - the membrane proton channel. These two domains are linked by a central stalk rotating inside the F(1) region and a stationary peripheral stalk. During catalysis, ATP synthesis in the catalytic domain of F(1) is coupled via a rotary mechanism of the central stalk subunits to proton translocation. In vivo, can only synthesize ATP although its ATP hydrolase activity can be activated artificially in vitro. With the central stalk subunit delta, is essential for the biogenesis of F(1) catalytic part of the ATP synthase complex namely in the formation of F1 assembly intermediate. This chain is ATP synthase F(1) complex subunit gamma, mitochondrial, found in Mus musculus (Mouse).